We begin with the raw amino-acid sequence, 356 residues long: MASLTAALATPAAAALLLLVLLAAPASAANFTCAVASGTTCKSAILYTSPNATTYGNLVARFNTTTLPDLLGANGLPDGTLSSAPVAANSTVKIPFRCRCNGDVGQSDRLPIYVVQPQDGLDAIARNVFNAFVTYQEIAAANNIPDPNKINVSQTLWIPLPCSCDKEEGSNVMHLAYSVGKGENTSAIAAKYGVTESTLLTRNKIDDPTKLQMGQILDVPLPVCRSSISDTSADHNLMLLPDGTYGFTAGNCIRCSCSSTTYQLNCTAVQNKGCPSVPLCNGTLKLGETNGTGCGSTTCAYSGYSNSSSLIIQTSLATNQTTACQRGGSGRSQFARSMWSMSVISFHMVLIIICFL.

The N-terminal stretch at Met-1 to Ala-28 is a signal peptide. Asn-30 is a glycosylation site (N-linked (GlcNAc...) asparagine). Disulfide bonds link Cys-33–Cys-100, Cys-41–Cys-164, Cys-98–Cys-162, and Cys-100–Cys-164. Pro-50–Asn-51 contributes to the chitin binding site. Asn-63 and Asn-89 each carry an N-linked (GlcNAc...) asparagine glycan. 2 LysM domains span residues Pro-111–Ile-158 and Leu-175–Val-219. Chitin is bound by residues Pro-117–Ala-123, Asn-142, Pro-145–Val-152, Thr-155, and Gly-182. An N-linked (GlcNAc...) asparagine glycan is attached at Asn-151. Residue Asn-184 is glycosylated (N-linked (GlcNAc...) asparagine). Chitin contacts are provided by residues Ser-186 and Leu-211 to Met-213. 2 disulfide bridges follow: Cys-224–Cys-257 and Cys-252–Cys-274. Asn-265, Asn-281, Asn-290, Asn-306, and Asn-319 each carry an N-linked (GlcNAc...) asparagine glycan. A helical transmembrane segment spans residues Arg-336–Leu-356.

As to quaternary structure, forms homooligomer. Interacts with CERK1. Binds to chitin oligosaccharide elicitor. Interacts with LYP4 and LYP6. In terms of processing, N-glycosylated. In terms of tissue distribution, expressed in seedlings, roots, shoots, stems and flowers.

It is found in the cell membrane. In terms of biological role, chitin elicitor-binding protein involved in the perception and transduction of chitin oligosaccharide elicitor signal for defense responses. The chain is Chitin elicitor-binding protein from Oryza sativa subsp. japonica (Rice).